A 676-amino-acid polypeptide reads, in one-letter code: GRB2-associated-binding protein 2 (676 aa).

The residue at position 2 (Ser2) is a Phosphoserine. The 112-residue stretch at 6-117 (DVVCTGWLRK…WVQSICQICG (112 aa)) folds into the PH domain. Residues 127–178 (SLRNVSSAGHGPRSSPAELSSSSQHLLRERKSSAPSHSSQPTLFTFEPPVSN) form a disordered region. Phosphoserine occurs at positions 133, 140, 141, 148, 149, 159, 164, 210, 218, 223, and 264. Low complexity predominate over residues 140-149 (SSPAELSSSS). A compositionally biased stretch (polar residues) spans 159–169 (SAPSHSSQPTL). The residue at position 265 (Thr265) is a Phosphothreonine. A Phosphotyrosine modification is found at Tyr266. Thr278 carries the post-translational modification Phosphothreonine. Phosphoserine is present on residues Ser281 and Ser285. Thr287 is modified (phosphothreonine). A Phosphotyrosine modification is found at Tyr293. Thr331 carries the phosphothreonine modification. The interval 341-430 (VATPGDSAIA…RSAESMSDGV (90 aa)) is disordered. Positions 351–358 (PPPRPPKP) match the SH3-binding motif. Ser368 carries the phosphoserine modification. Residues Thr385 and Thr391 each carry the phosphothreonine modification. At Ser405 the chain carries Phosphoserine. Phosphothreonine is present on Thr408. 2 positions are modified to phosphoserine: Ser422 and Ser425. Tyr452 bears the Phosphotyrosine mark. Ser480 is modified (phosphoserine). The interval 492–531 (PSTTLPVHRGPSRGSEIQPPPVNRNLKPDRKAKPTPLDLR) is disordered. An SH3-binding motif is present at residues 510–519 (PPPVNRNLKP). At Ser543 the chain carries Phosphoserine. Polar residues-rich tracts occupy residues 556–577 (FNSS…STDS) and 589–611 (NPVS…STGS). Disordered regions lie at residues 556–643 (FNSS…KVDY) and 656–676 (NTMQ…GAKL). Phosphoserine occurs at positions 622 and 623. A Phosphotyrosine modification is found at Tyr643. Residues 656–670 (NTMQEWTDVRQSSEP) show a composition bias toward polar residues.

Belongs to the GAB family. Part of a complex composed of EEIG1, TNFRSF11A/RANK, PLCG2, GAB2, TEC and BTK; complex formation increases in the presence of TNFSF11/RANKL. Interacts with SHC1; may mediate interaction with receptors. Interacts with SYK. Interacts with PI-3 kinase. Interacts with GRB2 (via SH3 2 domain). Interacts (phosphorylated) with PTPN11. Interacts with TNFRSF11A (via cytoplasmic domain). Interacts (phosphorylated) with 14-3-3 family proteins SFN, YWHAB, YWHAE, YWHAG, YWHAH, YWHAQ and YWHAZ; prevents interaction with GRB2 and attenuates GAB2 signaling. Interacts with HCK. Post-translationally, phosphorylated on tyrosine residue(s) by the thrombopoietin receptor (TPOR), stem cell factor receptor (SCFR), and T-cell and B-cell antigen receptors, gp130, IL-2R and IL-3R. Phosphorylated upon stimulation of TNFRSF11A/RANK by TNFSF11/RANKL. Phosphorylated upon EGF stimulation. Phosphorylated on tyrosine residues by HCK upon IL6 signaling. Dephosphorylated by PTPN11.

The protein resides in the cytoplasm. The protein localises to the cell membrane. It localises to the membrane raft. Adapter protein which acts downstream of several membrane receptors including cytokine, antigen, hormone, cell matrix and growth factor receptors to regulate multiple signaling pathways. Regulates osteoclast differentiation mediating the TNFRSF11A/RANK signaling. In allergic response, it plays a role in mast cells activation and degranulation through PI-3-kinase regulation. Also involved in the regulation of cell proliferation and hematopoiesis. This chain is GRB2-associated-binding protein 2 (GAB2), found in Homo sapiens (Human).